The sequence spans 306 residues: D-alanine--D-alanine ligase (306 aa).

The ATP-grasp domain occupies 102–300 (KIVVASVGVS…YGDIVQWMVE (199 aa)). ATP is bound at residue 128-183 (PMEPPYVIKPVCEGSSLGVIIVKENESVPSLNVVGSEWVYADTVIVEKYIPGRELT). Mg(2+)-binding residues include Asp253, Glu267, and Asn269.

Belongs to the D-alanine--D-alanine ligase family. The cofactor is Mg(2+). Mn(2+) serves as cofactor.

The protein resides in the cytoplasm. It carries out the reaction 2 D-alanine + ATP = D-alanyl-D-alanine + ADP + phosphate + H(+). It participates in cell wall biogenesis; peptidoglycan biosynthesis. In terms of biological role, cell wall formation. The chain is D-alanine--D-alanine ligase from Bartonella henselae (strain ATCC 49882 / DSM 28221 / CCUG 30454 / Houston 1) (Rochalimaea henselae).